Consider the following 111-residue polypeptide: Ribosome-binding factor A (111 aa).

It belongs to the RbfA family. As to quaternary structure, monomer. Binds 30S ribosomal subunits, but not 50S ribosomal subunits or 70S ribosomes.

It is found in the cytoplasm. Functionally, one of several proteins that assist in the late maturation steps of the functional core of the 30S ribosomal subunit. Associates with free 30S ribosomal subunits (but not with 30S subunits that are part of 70S ribosomes or polysomes). Required for efficient processing of 16S rRNA. May interact with the 5'-terminal helix region of 16S rRNA. The chain is Ribosome-binding factor A from Helicobacter pylori (strain J99 / ATCC 700824) (Campylobacter pylori J99).